The following is a 345-amino-acid chain: Glycerol-3-phosphate dehydrogenase [NAD(P)+] (345 aa).

Residues Ser23, Tyr24, His44, and Lys118 each contribute to the NADPH site. Sn-glycerol 3-phosphate-binding residues include Lys118, Gly147, and Thr149. Ala151 provides a ligand contact to NADPH. 5 residues coordinate sn-glycerol 3-phosphate: Lys203, Asp256, Ser266, Arg267, and Asn268. Catalysis depends on Lys203, which acts as the Proton acceptor. Arg267 is an NADPH binding site. NADPH is bound by residues Val291 and Glu293.

Belongs to the NAD-dependent glycerol-3-phosphate dehydrogenase family.

It is found in the cytoplasm. The catalysed reaction is sn-glycerol 3-phosphate + NAD(+) = dihydroxyacetone phosphate + NADH + H(+). It carries out the reaction sn-glycerol 3-phosphate + NADP(+) = dihydroxyacetone phosphate + NADPH + H(+). It functions in the pathway membrane lipid metabolism; glycerophospholipid metabolism. Functionally, catalyzes the reduction of the glycolytic intermediate dihydroxyacetone phosphate (DHAP) to sn-glycerol 3-phosphate (G3P), the key precursor for phospholipid synthesis. This chain is Glycerol-3-phosphate dehydrogenase [NAD(P)+], found in Vibrio campbellii (strain ATCC BAA-1116).